A 1337-amino-acid chain; its full sequence is Nucleoporin POM152 (1337 aa).

A disordered region spans residues 1–48 (MEHRYNVFNDTPRGNHWMGSSVSGSPRPSYSSRPNVNTTRRFQYSDDE). Over 1–110 (MEHRYNVFND…TDVLEISKQR (110 aa)) the chain is Cytoplasmic. The interval 1–175 (MEHRYNVFND…SFNIPRLTFK (175 aa)) is pore side. A compositionally biased stretch (low complexity) spans 19–37 (GSSVSGSPRPSYSSRPNVN). A phosphoserine mark is found at S45 and S60. A helical transmembrane segment spans residues 111-131 (TFAVILFLIIQCYKIYDLVIL). Over 132-148 (KSGLPLSGLLFKNYRFN) the chain is Perinuclear space. The chain crosses the membrane as a helical span at residues 149-169 (FISKYFIIDSFFLYVLPSFNI). Topologically, residues 170 to 172 (PRL) are cytoplasmic. A helical membrane pass occupies residues 173 to 193 (TFKPWVVYLQILAMLLLNIFI). The Perinuclear space portion of the chain corresponds to 194 to 1337 (SSDHEFVLIS…FAKNDLFFNN (1144 aa)). The segment at 196 to 1337 (DHEFVLISLI…FAKNDLFFNN (1142 aa)) is cisternal side. N-linked (GlcNAc...) asparagine glycosylation occurs at N280. Repeat copies occupy residues 390–413 (DRCI…KLAY), 626–650 (DQCV…YYNT), 732–755 (KLCL…TLTY), 836–859 (KIKH…TVKF), 943–966 (EVCQ…ILEY), 1058–1077 (FLEP…SITF), 1157–1178 (EYCV…MIKY), and 1253–1276 (DIRE…SLTY). Positions 390–1276 (DRCIGDSDNV…EGTPPFSLTY (887 aa)) are 8 X 24 AA approximate repeats.

Component of the nuclear pore complex (NPC). NPC constitutes the exclusive means of nucleocytoplasmic transport. NPCs allow the passive diffusion of ions and small molecules and the active, nuclear transport receptor-mediated bidirectional transport of macromolecules such as proteins, RNAs, ribonucleoparticles (RNPs), and ribosomal subunits across the nuclear envelope. Due to its 8-fold rotational symmetry, all subunits are present with 8 copies or multiples thereof. Interacts with NUP188. In terms of processing, the N-terminus is blocked. Post-translationally, phosphorylated by CDC28.

It localises to the nucleus. The protein resides in the nuclear pore complex. The protein localises to the nucleus membrane. Its function is as follows. Functions as a component of the nuclear pore complex (NPC). NPC components, collectively referred to as nucleoporins (NUPs), can play the role of both NPC structural components and of docking or interaction partners for transiently associated nuclear transport factors. POM152 is important for the de novo assembly of NPCs. The chain is Nucleoporin POM152 (POM152) from Saccharomyces cerevisiae (strain ATCC 204508 / S288c) (Baker's yeast).